A 213-amino-acid chain; its full sequence is FMN-dependent NADH:quinone oxidoreductase 1 (213 aa).

18-20 (SVS) serves as a coordination point for FMN.

Belongs to the azoreductase type 1 family. In terms of assembly, homodimer. The cofactor is FMN.

The catalysed reaction is 2 a quinone + NADH + H(+) = 2 a 1,4-benzosemiquinone + NAD(+). The enzyme catalyses N,N-dimethyl-1,4-phenylenediamine + anthranilate + 2 NAD(+) = 2-(4-dimethylaminophenyl)diazenylbenzoate + 2 NADH + 2 H(+). Its function is as follows. Quinone reductase that provides resistance to thiol-specific stress caused by electrophilic quinones. In terms of biological role, also exhibits azoreductase activity. Catalyzes the reductive cleavage of the azo bond in aromatic azo compounds to the corresponding amines. The protein is FMN-dependent NADH:quinone oxidoreductase 1 of Bacillus cereus (strain ATCC 10987 / NRS 248).